The chain runs to 299 residues: METVNNNLQQFLHFQKVERGLSNNTIQSYGRDLKQYIQYVERVEEIRSARNITRETILHYLYHLREQGRAETSIARAVAAIRSFHQFLLREKLSDSDPTVHVEIPKATKRLPKALTIEEVEALLNSPQGRDPFSLRNKAMLELLYATGMRVSELIGLTLSDIHLSMGFVRCLGKGNKERIIPIGQVATEAVESYLANGRGKLMKKQSHDHVFVNHHGRPLSRQGFWKMLKQLAKNVNIDKPLTPHTLRHSFATHLLENGADLRAVQEMLGHADISTTQIYTHVTKTRMRDVYAHFHPRA.

One can recognise a Core-binding (CB) domain in the interval glutamate 2–leucine 89. In terms of domain architecture, Tyr recombinase spans arginine 110–alanine 293. Catalysis depends on residues arginine 150, lysine 174, histidine 245, arginine 248, and histidine 271. The active-site O-(3'-phospho-DNA)-tyrosine intermediate is the tyrosine 280.

It belongs to the 'phage' integrase family. XerD subfamily. In terms of assembly, forms a cyclic heterotetrameric complex composed of two molecules of XerC and two molecules of XerD.

Its subcellular location is the cytoplasm. Site-specific tyrosine recombinase, which acts by catalyzing the cutting and rejoining of the recombining DNA molecules. The XerC-XerD complex is essential to convert dimers of the bacterial chromosome into monomers to permit their segregation at cell division. It also contributes to the segregational stability of plasmids. This Halalkalibacterium halodurans (strain ATCC BAA-125 / DSM 18197 / FERM 7344 / JCM 9153 / C-125) (Bacillus halodurans) protein is Tyrosine recombinase XerD.